Reading from the N-terminus, the 366-residue chain is Anhydro-N-acetylmuramic acid kinase (366 aa).

Residue 15–22 coordinates ATP; the sequence is GTSLDGVD.

Belongs to the anhydro-N-acetylmuramic acid kinase family.

It catalyses the reaction 1,6-anhydro-N-acetyl-beta-muramate + ATP + H2O = N-acetyl-D-muramate 6-phosphate + ADP + H(+). It participates in amino-sugar metabolism; 1,6-anhydro-N-acetylmuramate degradation. Its pathway is cell wall biogenesis; peptidoglycan recycling. Catalyzes the specific phosphorylation of 1,6-anhydro-N-acetylmuramic acid (anhMurNAc) with the simultaneous cleavage of the 1,6-anhydro ring, generating MurNAc-6-P. Is required for the utilization of anhMurNAc either imported from the medium or derived from its own cell wall murein, and thus plays a role in cell wall recycling. This chain is Anhydro-N-acetylmuramic acid kinase, found in Hydrogenovibrio crunogenus (strain DSM 25203 / XCL-2) (Thiomicrospira crunogena).